Reading from the N-terminus, the 166-residue chain is Large ribosomal subunit protein uL10 (166 aa).

This sequence belongs to the universal ribosomal protein uL10 family. In terms of assembly, part of the ribosomal stalk of the 50S ribosomal subunit. The N-terminus interacts with L11 and the large rRNA to form the base of the stalk. The C-terminus forms an elongated spine to which L12 dimers bind in a sequential fashion forming a multimeric L10(L12)X complex.

Forms part of the ribosomal stalk, playing a central role in the interaction of the ribosome with GTP-bound translation factors. This chain is Large ribosomal subunit protein uL10, found in Streptococcus equi subsp. zooepidemicus (strain MGCS10565).